We begin with the raw amino-acid sequence, 390 residues long: Oxygen-dependent coproporphyrinogen-III oxidase (390 aa).

The tract at residues 131-140 (VLQDGDVFEK) is important for dimerization. Serine 181 lines the substrate pocket. Histidine 195 functions as the Proton donor in the catalytic mechanism. Substrate contacts are provided by residues 197–199 (NYR) and 348–353 (GARYES). Residues 329–365 (YVEFNLIYDRGTKFGLYTPGARYESILMSLPLHARWE) are important for dimerization.

The protein belongs to the aerobic coproporphyrinogen-III oxidase family. As to quaternary structure, homodimer.

It catalyses the reaction coproporphyrinogen III + O2 + 2 H(+) = protoporphyrinogen IX + 2 CO2 + 2 H2O. Its pathway is porphyrin-containing compound metabolism; protoporphyrin-IX biosynthesis; protoporphyrinogen-IX from coproporphyrinogen-III (O2 route): step 1/1. In terms of biological role, involved in the heme biosynthesis. Catalyzes the aerobic oxidative decarboxylation of propionate groups of rings A and B of coproporphyrinogen-III to yield the vinyl groups in protoporphyrinogen-IX. This Drosophila melanogaster (Fruit fly) protein is Oxygen-dependent coproporphyrinogen-III oxidase (Coprox).